Here is a 211-residue protein sequence, read N- to C-terminus: Prolactin-1 (211 aa).

The signal sequence occupies residues 1 to 23; the sequence is MARRSQGTKLHLAVLCLVVSCHA. Disulfide bonds link Cys69–Cys184 and Cys201–Cys211.

Belongs to the somatotropin/prolactin family.

The protein resides in the secreted. This chain is Prolactin-1 (prl1), found in Oncorhynchus keta (Chum salmon).